The chain runs to 337 residues: Ketol-acid reductoisomerase (NADP(+)) (337 aa).

The KARI N-terminal Rossmann domain maps to 3–183 (IELLYDADAD…GGARAGVIPT (181 aa)). Residues 26–29 (YGSQ), R49, S52, S54, and 84–87 (DTSQ) contribute to the NADP(+) site. The active site involves H109. G135 serves as a coordination point for NADP(+). The KARI C-terminal knotted domain maps to 184-329 (TFREETETDL…SKLRDLMSWV (146 aa)). Mg(2+) is bound by residues D192, E196, E228, and E232. S253 contacts substrate.

Belongs to the ketol-acid reductoisomerase family. Mg(2+) serves as cofactor.

It catalyses the reaction (2R)-2,3-dihydroxy-3-methylbutanoate + NADP(+) = (2S)-2-acetolactate + NADPH + H(+). The enzyme catalyses (2R,3R)-2,3-dihydroxy-3-methylpentanoate + NADP(+) = (S)-2-ethyl-2-hydroxy-3-oxobutanoate + NADPH + H(+). It functions in the pathway amino-acid biosynthesis; L-isoleucine biosynthesis; L-isoleucine from 2-oxobutanoate: step 2/4. The protein operates within amino-acid biosynthesis; L-valine biosynthesis; L-valine from pyruvate: step 2/4. In terms of biological role, involved in the biosynthesis of branched-chain amino acids (BCAA). Catalyzes an alkyl-migration followed by a ketol-acid reduction of (S)-2-acetolactate (S2AL) to yield (R)-2,3-dihydroxy-isovalerate. In the isomerase reaction, S2AL is rearranged via a Mg-dependent methyl migration to produce 3-hydroxy-3-methyl-2-ketobutyrate (HMKB). In the reductase reaction, this 2-ketoacid undergoes a metal-dependent reduction by NADPH to yield (R)-2,3-dihydroxy-isovalerate. The sequence is that of Ketol-acid reductoisomerase (NADP(+)) from Corynebacterium diphtheriae (strain ATCC 700971 / NCTC 13129 / Biotype gravis).